A 300-amino-acid polypeptide reads, in one-letter code: N-acetylmuramic acid 6-phosphate etherase (300 aa).

In terms of domain architecture, SIS spans 57–220; that stretch reads IAVAFQSGGR…TTGAMIRTGK (164 aa). Glutamate 85 serves as the catalytic Proton donor. The active site involves glutamate 116.

The protein belongs to the GCKR-like family. MurNAc-6-P etherase subfamily. Homodimer.

It catalyses the reaction N-acetyl-D-muramate 6-phosphate + H2O = N-acetyl-D-glucosamine 6-phosphate + (R)-lactate. Its pathway is amino-sugar metabolism; 1,6-anhydro-N-acetylmuramate degradation. It functions in the pathway amino-sugar metabolism; N-acetylmuramate degradation. The protein operates within cell wall biogenesis; peptidoglycan recycling. In terms of biological role, specifically catalyzes the cleavage of the D-lactyl ether substituent of MurNAc 6-phosphate, producing GlcNAc 6-phosphate and D-lactate. Together with AnmK, is also required for the utilization of anhydro-N-acetylmuramic acid (anhMurNAc) either imported from the medium or derived from its own cell wall murein, and thus plays a role in cell wall recycling. The protein is N-acetylmuramic acid 6-phosphate etherase of Aliivibrio fischeri (strain ATCC 700601 / ES114) (Vibrio fischeri).